Reading from the N-terminus, the 434-residue chain is Eukaryotic translation initiation factor 3 subunit E (434 aa).

The PCI domain maps to F219–L392.

It belongs to the eIF-3 subunit E family. Component of the eukaryotic translation initiation factor 3 (eIF-3) complex. The eIF-3 complex interacts with pix. Interacts with mxt.

It is found in the cytoplasm. In terms of biological role, component of the eukaryotic translation initiation factor 3 (eIF-3) complex, which is involved in protein synthesis of a specialized repertoire of mRNAs and, together with other initiation factors, stimulates binding of mRNA and methionyl-tRNAi to the 40S ribosome. The eIF-3 complex specifically targets and initiates translation of a subset of mRNAs involved in cell proliferation. This is Eukaryotic translation initiation factor 3 subunit E (eIF3-S6) from Drosophila ananassae (Fruit fly).